We begin with the raw amino-acid sequence, 619 residues long: DNA mismatch repair protein MutL (619 aa).

The segment at 339 to 400 (AEKDDPPAPR…GGASWPHAQP (62 aa)) is disordered.

The protein belongs to the DNA mismatch repair MutL/HexB family.

In terms of biological role, this protein is involved in the repair of mismatches in DNA. It is required for dam-dependent methyl-directed DNA mismatch repair. May act as a 'molecular matchmaker', a protein that promotes the formation of a stable complex between two or more DNA-binding proteins in an ATP-dependent manner without itself being part of a final effector complex. The chain is DNA mismatch repair protein MutL from Klebsiella pneumoniae subsp. pneumoniae (strain ATCC 700721 / MGH 78578).